The sequence spans 232 residues: Succinyl-CoA:3-ketoacid coenzyme A transferase subunit A (232 aa).

A CoA-binding site is contributed by 24–30 (GGFGLCG).

This sequence belongs to the 3-oxoacid CoA-transferase subunit A family. In terms of assembly, heterodimer of a subunit A and a subunit B.

It carries out the reaction a 3-oxo acid + succinyl-CoA = a 3-oxoacyl-CoA + succinate. The chain is Succinyl-CoA:3-ketoacid coenzyme A transferase subunit A (scoA) from Helicobacter pylori (strain ATCC 700392 / 26695) (Campylobacter pylori).